We begin with the raw amino-acid sequence, 647 residues long: Chaperone protein DnaK (647 aa).

The residue at position 199 (Thr-199) is a Phosphothreonine; by autocatalysis. Positions 602 to 647 are disordered; that stretch reads MYAQEQAQAGQQAGPGAGSASAGQSGEKPVEGEVVDAEFEEVKDKK. The span at 604 to 627 shows a compositional bias: low complexity; it reads AQEQAQAGQQAGPGAGSASAGQSG.

The protein belongs to the heat shock protein 70 family.

Functionally, acts as a chaperone. This Nitrosomonas eutropha (strain DSM 101675 / C91 / Nm57) protein is Chaperone protein DnaK.